The chain runs to 227 residues: Cytidylate kinase (227 aa).

Gly-10–Thr-18 is an ATP binding site.

This sequence belongs to the cytidylate kinase family. Type 1 subfamily.

Its subcellular location is the cytoplasm. The catalysed reaction is CMP + ATP = CDP + ADP. The enzyme catalyses dCMP + ATP = dCDP + ADP. The polypeptide is Cytidylate kinase (Streptococcus mutans serotype c (strain ATCC 700610 / UA159)).